A 173-amino-acid chain; its full sequence is Coordinator of PRMT5 and differentiation stimulator (173 aa).

Methionine 1 is modified (N-acetylmethionine). The disordered stretch occupies residues 1-70 (MDPQAATGRG…EGPSSEEEGF (70 aa)). A phosphoserine mark is found at serine 64 and serine 65.

Interacts with PRMT5. Interacts with histone H4; specifically interacts with the N-terminus of histone H4 but not with histone H3. Interacts with CBFB. Found in a complex with PRMT5, RUNX1 and CBFB.

The protein resides in the nucleus. Its function is as follows. Histone-binding protein required for histone H4 methyltransferase activity of PRMT5. Specifically required for histone H4 'Arg-3' methylation mediated by PRMT5, but not histone H3 'Arg-8' methylation, suggesting that it modulates the substrate specificity of PRMT5. Specifically interacts with the N-terminus of histone H4 but not with histone H3, suggesting that it acts by promoting the association between histone H4 and PRMT5. Involved in CCNE1 promoter repression. Plays a role in muscle cell differentiation by modulating the recruitment of PRMT5 to the promoter of genes involved in the coordination between cell cycle exit and muscle differentiation. The chain is Coordinator of PRMT5 and differentiation stimulator (Coprs) from Mus musculus (Mouse).